A 62-amino-acid polypeptide reads, in one-letter code: uncharacterized protein (62 aa).

This is an uncharacterized protein from Escherichia coli (Bacteriophage T4).